An 89-amino-acid chain; its full sequence is YcgL domain-containing protein Asuc_1390 (89 aa).

A YcgL domain is found at 1–85 (MLCAIYKSKK…KDDWLFTIEK (85 aa)).

The sequence is that of YcgL domain-containing protein Asuc_1390 from Actinobacillus succinogenes (strain ATCC 55618 / DSM 22257 / CCUG 43843 / 130Z).